The following is a 286-amino-acid chain: L-cysteine S-thiosulfotransferase subunit SoxA (286 aa).

Positions 1–26 are cleaved as a signal peptide; that stretch reads MTVSKRFLAPVFAMVGGLVLAFSANA. The 87-residue stretch at 80 to 166 folds into the Cytochrome c domain; it reads LAVERGADIW…ALTSYIKHQS (87 aa). Positions 100, 103, 104, 138, 202, 205, and 206 each coordinate heme. Arg243 contacts substrate. Cys247 is a binding site for heme. Cys247 (cysteine persulfide intermediate) is an active-site residue.

The protein belongs to the SoxA family. As to quaternary structure, heterodimer of SoxA and SoxX. Heme is required as a cofactor. In terms of processing, cysteine persulfide at Cys-247.

The protein resides in the periplasm. It catalyses the reaction L-cysteinyl-[SoxY protein] + thiosulfate + 2 Fe(III)-[cytochrome c] = S-sulfosulfanyl-L-cysteinyl-[SoxY protein] + 2 Fe(II)-[cytochrome c] + 2 H(+). It carries out the reaction S-sulfanyl-L-cysteinyl-[SoxY protein] + thiosulfate + 2 Fe(III)-[cytochrome c] = S-(2-sulfodisulfanyl)-L-cysteinyl-[SoxY protein] + 2 Fe(II)-[cytochrome c] + 2 H(+). C-type diheme cytochrome, which is part of the SoxAX cytochrome complex involved in sulfur oxidation. The SoxAX complex catalyzes the formation of a heterodisulfide bond between the conserved cysteine residue on a sulfur carrier SoxYZ complex subunit SoxY and thiosulfate or other inorganic sulfur substrates. This leads to the liberation of two electrons, which may be transferred from the SoxAX complex to another cytochrome c that then channels them into the respiratory electron transport chain. Some electrons may be used for reductive CO(2) fixation. The sequence is that of L-cysteine S-thiosulfotransferase subunit SoxA from Pseudaminobacter salicylatoxidans.